Here is a 442-residue protein sequence, read N- to C-terminus: MFS transporter asaE (442 aa).

Residues Met1–Gly10 show a composition bias toward polar residues. The segment at Met1–Pro43 is disordered. Basic and acidic residues predominate over residues Arg17–Gly34. 12 helical membrane passes run Leu47 to Val67, Thr89 to Gly109, Tyr119 to Thr139, Ile150 to Trp170, Ile177 to Val197, Phe206 to Val226, Pro252 to Ile272, Leu288 to Ala307, Ile319 to Thr339, Ala342 to Ser362, Leu381 to Leu401, and Ile413 to Gly433.

Belongs to the major facilitator superfamily. Monocarboxylate porter (TC 2.A.1.13) family.

It is found in the cell membrane. It participates in secondary metabolite biosynthesis. In terms of biological role, MFS transporter; part of the gene cluster that mediates the biosynthesis of aspergillic acid. Probably involved in aspergillic acid metabolism and transport. This chain is MFS transporter asaE, found in Aspergillus flavus (strain ATCC 200026 / FGSC A1120 / IAM 13836 / NRRL 3357 / JCM 12722 / SRRC 167).